A 259-amino-acid polypeptide reads, in one-letter code: Small ribosomal subunit protein uS2 (259 aa).

This sequence belongs to the universal ribosomal protein uS2 family.

The chain is Small ribosomal subunit protein uS2 from Streptococcus pneumoniae (strain Hungary19A-6).